Here is a 214-residue protein sequence, read N- to C-terminus: External core antigen (214 aa).

A signal peptide spans 1–19 (MQLFHLCLIISCTCPTVQA). Residues 25-27 (GWL) are HBEAG. Residues 165–214 (NAPILSTLPETTVVRRRDRGRSPRRRTPSPRRRRSQSPRRRRSQSRESQC) form a disordered region. Basic residues predominate over residues 178–207 (VRRRDRGRSPRRRTPSPRRRRSQSPRRRRS). The stretch at 186-192 (SPRRRTP) is one 1; half-length repeat. The 3 X 8 AA repeats of S-P-R-R-R-R-S-Q stretch occupies residues 186–208 (SPRRRTPSPRRRRSQSPRRRRSQ). Residues 186 to 214 (SPRRRTPSPRRRRSQSPRRRRSQSRESQC) constitute a propeptide that is removed on maturation. Tandem repeats lie at residues 193-200 (SPRRRRSQ) and 201-208 (SPRRRRSQ).

It belongs to the orthohepadnavirus precore antigen family. As to quaternary structure, homodimerizes. In terms of processing, phosphorylated. Cleaved by host furin.

It localises to the secreted. The protein resides in the host nucleus. In terms of biological role, may regulate immune response to the intracellular capsid in acting as a T-cell tolerogen, by having an immunoregulatory effect which prevents destruction of infected cells by cytotoxic T-cells. This immune regulation may predispose to chronicity during perinatal infections and prevent severe liver injury during adult infections. This Hepatitis B virus genotype A2 subtype adw2 (isolate Germany/991/1990) (HBV-A) protein is External core antigen.